Consider the following 156-residue polypeptide: Transcription elongation factor GreA (156 aa).

The stretch at methionine 1–arginine 32 forms a coiled coil.

It belongs to the GreA/GreB family.

Functionally, necessary for efficient RNA polymerase transcription elongation past template-encoded arresting sites. The arresting sites in DNA have the property of trapping a certain fraction of elongating RNA polymerases that pass through, resulting in locked ternary complexes. Cleavage of the nascent transcript by cleavage factors such as GreA or GreB allows the resumption of elongation from the new 3'terminus. GreA releases sequences of 2 to 3 nucleotides. This chain is Transcription elongation factor GreA, found in Thermotoga sp. (strain RQ2).